Here is a 72-residue protein sequence, read N- to C-terminus: Omega-conotoxin-like S6.6 (72 aa).

Residues 1 to 22 (MKLTCVVIVAVLLLTACQLLTA) form the signal peptide. The propeptide occupies 23 to 45 (DDSRGTQKHRALRSDTKLSMSTR). 3 disulfides stabilise this stretch: C46–C61, C53–C65, and C60–C71. Residue C71 is modified to Cysteine amide.

This sequence belongs to the conotoxin O1 superfamily. In terms of tissue distribution, expressed by the venom duct.

The protein resides in the secreted. Its function is as follows. Omega-conotoxins act at presynaptic membranes, they bind and block voltage-gated calcium channels (Cav). This toxin blocks N-, P- and Q-type calcium channels. The polypeptide is Omega-conotoxin-like S6.6 (Conus striatus (Striated cone)).